A 112-amino-acid polypeptide reads, in one-letter code: UPF0342 protein STER_0693 (112 aa).

Belongs to the UPF0342 family.

The polypeptide is UPF0342 protein STER_0693 (Streptococcus thermophilus (strain ATCC BAA-491 / LMD-9)).